A 445-amino-acid polypeptide reads, in one-letter code: Glycine--tRNA ligase (445 aa).

The substrate site is built by Arg-97 and Glu-145. Residues 177–179 (RNE), 187–192 (FRTCEF), 262–263 (EI), and 308–311 (GLTR) each bind ATP. 192–196 (FEQME) is a binding site for substrate. 304–308 (ETSAG) contributes to the substrate binding site.

Belongs to the class-II aminoacyl-tRNA synthetase family. As to quaternary structure, homodimer.

It localises to the cytoplasm. The catalysed reaction is tRNA(Gly) + glycine + ATP = glycyl-tRNA(Gly) + AMP + diphosphate. Its function is as follows. Catalyzes the attachment of glycine to tRNA(Gly). The polypeptide is Glycine--tRNA ligase (Borreliella afzelii (strain PKo) (Borrelia afzelii)).